The chain runs to 549 residues: MGGFKIPNYEGVDPTGSWYSVLTPLLFLERAGKYFKDKTAVVYRDSRYTYSTFYDNVMVQASALMRRGFSREDKLSFISRNRPEFLESFFGVPYAGGVLVPINFRLSPKEMAYIINHSDSKFVVVDEPYLNSLLEVKDQIKAEIILLEDPDNPSASETARKEVRMTYRELVKGGSRDPLPIPAKEEYSMITLYYTSGTTGLPKGVMHHHRGAFLNAMAEVLEHQMDLNSVYLWTLPMFHAASWGFSWATVAVGATNVCLDKVDYPLIYRLVEKERVTHMCAAPTVYVNLADYMKRNNLKFSNRVHMLVAGAAPAPATLKAMQEIGGYMCHVYGLTETYGPHSICEWRREWDSLPLEEQAKLKARQGIPYVSFEMDVFDANGKPVPWDGKTIGEVVMRGHNVALGYYKNPEKTAESFRDGWFHSGDAAVVHPDGYIEIVDRFKDLINTGGEKVSSILVEKTLMEIPGVKAVAVYGTPDEKWGEVVTARIELQEGVKLTEEEVIKFCKERLAHFECPKIVEFGPIPMTATGKMQKYVLRNEAKAKANKEKS.

Residues 195-203 (TSGTTGLPK), 336-341 (ETYGPH), D425, and R440 contribute to the ATP site. CoA is bound by residues 448–450 (GGE), K506, and 514–516 (CPK). Position 530 (K530) interacts with ATP.

This sequence belongs to the ATP-dependent AMP-binding enzyme family. Mg(2+) serves as cofactor. The cofactor is Mn(2+).

The enzyme catalyses 4-hydroxybutanoate + ATP + CoA = 4-hydroxybutanoyl-CoA + AMP + diphosphate. It catalyses the reaction acetate + ATP + CoA = acetyl-CoA + AMP + diphosphate. It carries out the reaction propanoate + ATP + CoA = propanoyl-CoA + AMP + diphosphate. The catalysed reaction is a medium-chain fatty acid + ATP + CoA = a medium-chain fatty acyl-CoA + AMP + diphosphate. Catalyzes the ligation of coenzyme A (CoA) to 4-hydroxybutyrate (4HB). It can also use butyrate, valerate, propionate, acetate and 3-hydroxybutyrate (3HB) as substrates. This Metallosphaera sedula (strain ATCC 51363 / DSM 5348 / JCM 9185 / NBRC 15509 / TH2) protein is 4-hydroxybutyrate--CoA ligase 2.